Consider the following 941-residue polypeptide: Ankyrin repeat and MYND domain-containing protein 1 (941 aa).

MORN repeat units lie at residues 2-24 (YQGE…TGES), 25-47 (YHGQ…DGSS), and 70-92 (FQGL…DGSQ). ANK repeat units lie at residues 292–321 (KGYT…DVNK), 513–542 (MRRM…DPNL), 545–574 (VPMQ…RTDI), 581–613 (STLT…DVDA), 657–691 (GGRT…NPNL), 694–723 (SGHS…DPNL), and 737–766 (CDLT…DILK). Zn(2+)-binding residues include cysteine 880, cysteine 883, cysteine 894, cysteine 897, cysteine 903, cysteine 907, histidine 916, and cysteine 920. The MYND-type zinc-finger motif lies at 880-920 (CYQCGRSIGVRLLPCPRCYGILTCSKYCKTKAWTEFHKKDC).

The protein is Ankyrin repeat and MYND domain-containing protein 1 (ANKMY1) of Homo sapiens (Human).